The sequence spans 329 residues: Fructose-1,6-bisphosphatase class 1 (329 aa).

Residues Glu84, Asp103, Leu105, and Asp106 each coordinate Mg(2+). Substrate is bound by residues 106–109, Asn196, and Lys262; that span reads DGSS. Glu268 contributes to the Mg(2+) binding site.

Belongs to the FBPase class 1 family. As to quaternary structure, homotetramer. Requires Mg(2+) as cofactor.

It is found in the cytoplasm. The catalysed reaction is beta-D-fructose 1,6-bisphosphate + H2O = beta-D-fructose 6-phosphate + phosphate. Its pathway is carbohydrate biosynthesis; gluconeogenesis. The sequence is that of Fructose-1,6-bisphosphatase class 1 from Shewanella halifaxensis (strain HAW-EB4).